The sequence spans 390 residues: Homoserine O-succinyltransferase (390 aa).

One can recognise an AB hydrolase-1 domain in the interval N56–L365. S162 (nucleophile) is an active-site residue. R232 serves as a coordination point for substrate. Active-site residues include D327 and H360. D361 contacts substrate.

The protein belongs to the AB hydrolase superfamily. MetX family. In terms of assembly, homodimer.

The protein resides in the cytoplasm. The catalysed reaction is L-homoserine + succinyl-CoA = O-succinyl-L-homoserine + CoA. The protein operates within amino-acid biosynthesis; L-methionine biosynthesis via de novo pathway; O-succinyl-L-homoserine from L-homoserine: step 1/1. Functionally, transfers a succinyl group from succinyl-CoA to L-homoserine, forming succinyl-L-homoserine. In vitro, also has serine succinyl transferase activity. The chain is Homoserine O-succinyltransferase from Litchfieldella anticariensis (strain DSM 16096 / CECT 5854 / CIP 108499 / LMG 22089 / FP35) (Halomonas anticariensis).